The chain runs to 138 residues: Small ribosomal subunit protein uS8 (138 aa).

It belongs to the universal ribosomal protein uS8 family. As to quaternary structure, part of the 30S ribosomal subunit. Contacts proteins S5 and S12.

Functionally, one of the primary rRNA binding proteins, it binds directly to 16S rRNA central domain where it helps coordinate assembly of the platform of the 30S subunit. The polypeptide is Small ribosomal subunit protein uS8 (Thermus aquaticus).